The sequence spans 478 residues: Vitronectin (478 aa).

An N-terminal signal peptide occupies residues 1 to 19 (MAPLRPLLILALLAWVALA). One can recognise an SMB domain in the interval 20–63 (DQESCKGRCTEGFNVDKKCQCDELCSYYQSCCTDYTAECKPQVT). Cystine bridges form between cysteine 24–cysteine 28, cysteine 24–cysteine 40, cysteine 28–cysteine 58, cysteine 38–cysteine 40, cysteine 38–cysteine 51, cysteine 44–cysteine 50, and cysteine 51–cysteine 58. Positions 64-66 (RGD) match the Cell attachment site motif. Phosphothreonine; by CK2; in vitro is present on threonine 69. Residue tyrosine 75 is modified to Sulfotyrosine. Threonine 76 carries the post-translational modification Phosphothreonine; by CK2; in vitro. Tyrosine 78 bears the Sulfotyrosine mark. The N-linked (GlcNAc...) (complex) asparagine glycan is linked to asparagine 86. Residues 91 to 158 (EQVGGPSLTS…PPAEEELCSG (68 aa)) form a disordered region. Polar residues predominate over residues 97-112 (SLTSDLQAQSKGNPEQ). A phosphoserine mark is found at serine 130 and serine 137. Basic and acidic residues predominate over residues 133-143 (EGIDSRPETLH). Hemopexin repeat units lie at residues 158–202 (GKPF…VWGI), 203–250 (EGPI…FDGI), and 251–305 (PDNV…FEHF). A glycan (N-linked (GlcNAc...) asparagine) is linked at asparagine 169. N-linked (GlcNAc...) (complex) asparagine glycosylation occurs at asparagine 242. Residue tyrosine 282 is modified to Sulfotyrosine. Residues cysteine 293 and cysteine 430 are joined by a disulfide bond. Residue serine 312 is modified to Phosphoserine. Positions 362–395 (RPSLAKKQRFRHRNRKGYRSQRGHSRGRNQNSRR) are heparin-binding. The interval 364–398 (SLAKKQRFRHRNRKGYRSQRGHSRGRNQNSRRPSR) is disordered. Residues 365-388 (LAKKQRFRHRNRKGYRSQRGHSRG) are compositionally biased toward basic residues. Phosphoserine; by PKA is present on serine 397. Sulfotyrosine is present on residues tyrosine 417 and tyrosine 420. Residues 419 to 472 (DYRMDWLVPATCEPIQSVFFFSGDKYYRVNLRTRRVDTVDPPYPRSIAQYWLGC) form a Hemopexin 4 repeat.

As to quaternary structure, exists in two forms: a single chain 75 kDa form (V75) and a clipped form composed of two chains (65 kDa and 10 kDa) (V65+V10) which are held together by a disulfide bond. Interacts with SERPINE1/PAI1, insulin and C1QBP. In terms of assembly, (Microbial infection) Interacts (via hemopexin repeat 2) with P.falciparum (isolate CDC / Honduras) SERA5 P47 (via C-terminus); may form heterotetramers of two VTN and SERA5 P47 heterodimers; the interaction may protect merozoites from phagocytosis by host monocytes; VTN glycosylation appears to be dispensable for the interaction. Post-translationally, sulfated on tyrosine residues. In terms of processing, N- and O-glycosylated. Phosphorylation on Thr-69 and Thr-76 favors cell adhesion and spreading. Post-translationally, it has been suggested that the active SMB domain may be permitted considerable disulfide bond heterogeneity or variability, thus two alternate disulfide patterns based on 3D structures are described with 1 disulfide bond conserved in both. In terms of processing, phosphorylation sites are present in the extracellular medium. In terms of tissue distribution, expressed in the retina pigment epithelium (at protein level). Expressed in plasma (at protein level). Expressed in serum (at protein level).

It is found in the secreted. The protein localises to the extracellular space. Its subcellular location is the parasitophorous vacuole. Its function is as follows. Vitronectin is a cell adhesion and spreading factor found in serum and tissues. Vitronectin interact with glycosaminoglycans and proteoglycans. Is recognized by certain members of the integrin family and serves as a cell-to-substrate adhesion molecule. Inhibitor of the membrane-damaging effect of the terminal cytolytic complement pathway. Functionally, somatomedin-B is a growth hormone-dependent serum factor with protease-inhibiting activity. The protein is Vitronectin (VTN) of Homo sapiens (Human).